The primary structure comprises 231 residues: PX domain-containing protein 1 (231 aa).

The PX domain maps to 1–134; it reads MASAVFEGTS…TFFERSPLDQ (134 aa).

The polypeptide is PX domain-containing protein 1 (PXDC1) (Bos taurus (Bovine)).